The following is a 415-amino-acid chain: Peptide chain release factor subunit 1-1 (415 aa).

It belongs to the eukaryotic release factor 1 family. Heterodimer of two subunits, one of which binds GTP.

Its subcellular location is the cytoplasm. Functionally, directs the termination of nascent peptide synthesis (translation) in response to the termination codons UAA, UAG and UGA. In Methanosarcina acetivorans (strain ATCC 35395 / DSM 2834 / JCM 12185 / C2A), this protein is Peptide chain release factor subunit 1-1.